The sequence spans 66 residues: Large ribosomal subunit protein bL35 (66 aa).

Composition is skewed to basic residues over residues 1–15 (MPKL…KRFK) and 24–40 (HAQR…TKKQ). Residues 1-40 (MPKLKTKSGAKKRFKVTGTGKVMHAQRGKRHGMIKRTKKQ) form a disordered region.

Belongs to the bacterial ribosomal protein bL35 family.

The chain is Large ribosomal subunit protein bL35 from Bradyrhizobium sp. (strain ORS 278).